Here is a 126-residue protein sequence, read N- to C-terminus: UPF0231 protein VC0395_A0134/VC395_0622 (126 aa).

Belongs to the UPF0231 family.

The polypeptide is UPF0231 protein VC0395_A0134/VC395_0622 (Vibrio cholerae serotype O1 (strain ATCC 39541 / Classical Ogawa 395 / O395)).